The primary structure comprises 401 residues: tRNA(Ile)-lysidine synthase (401 aa).

17 to 22 (SGGPDS) provides a ligand contact to ATP.

This sequence belongs to the tRNA(Ile)-lysidine synthase family.

The protein localises to the cytoplasm. It catalyses the reaction cytidine(34) in tRNA(Ile2) + L-lysine + ATP = lysidine(34) in tRNA(Ile2) + AMP + diphosphate + H(+). Ligates lysine onto the cytidine present at position 34 of the AUA codon-specific tRNA(Ile) that contains the anticodon CAU, in an ATP-dependent manner. Cytidine is converted to lysidine, thus changing the amino acid specificity of the tRNA from methionine to isoleucine. The chain is tRNA(Ile)-lysidine synthase from Mycoplasma mycoides subsp. mycoides SC (strain CCUG 32753 / NCTC 10114 / PG1).